Consider the following 809-residue polypeptide: Acyl-homoserine lactone acylase QuiP (809 aa).

Residues 1 to 26 form the signal peptide; that stretch reads MASPAFSHFLPRFGVAAAVASALSLA. Residue S261 is the Nucleophile of the active site.

It belongs to the peptidase S45 family. Heterodimer of an alpha subunit and a beta subunit processed from the same precursor.

It is found in the periplasm. The catalysed reaction is an N-acyl-L-homoserine lactone + H2O = L-homoserine lactone + a carboxylate. Catalyzes the deacylation of acyl-homoserine lactone (AHL or acyl-HSL), releasing homoserine lactone (HSL) and the corresponding fatty acid. Possesses a specificity for the degradation of long-chain acyl-HSLs (side chains of seven or more carbons in length). In Pseudomonas fluorescens (strain ATCC BAA-477 / NRRL B-23932 / Pf-5), this protein is Acyl-homoserine lactone acylase QuiP (quiP).